A 210-amino-acid polypeptide reads, in one-letter code: Somatotropin-2 (210 aa).

The signal sequence occupies residues 1–22; that stretch reads MARALVLLSVVLVSLLVNQGRA. His-38 is a Zn(2+) binding site. A disulfide bridge connects residues Cys-71 and Cys-183. Glu-192 is a binding site for Zn(2+). A disulfide bond links Cys-200 and Cys-208.

The protein belongs to the somatotropin/prolactin family.

The protein resides in the secreted. In terms of biological role, growth hormone plays an important role in growth control and is involved in the regulation of several anabolic processes. Implicated as an osmoregulatory substance important for seawater adaptation. This Carassius auratus (Goldfish) protein is Somatotropin-2 (gh2).